The primary structure comprises 312 residues: Malate dehydrogenase (312 aa).

NAD(+) is bound by residues 7-13 (GAAGGIG) and Asp-34. Residues Arg-81 and Arg-87 each coordinate substrate. NAD(+) contacts are provided by residues Asn-94 and 117-119 (ITN). Positions 119 and 153 each coordinate substrate. His-177 functions as the Proton acceptor in the catalytic mechanism. Met-228 provides a ligand contact to NAD(+).

It belongs to the LDH/MDH superfamily. MDH type 1 family. In terms of assembly, homodimer.

The enzyme catalyses (S)-malate + NAD(+) = oxaloacetate + NADH + H(+). In terms of biological role, catalyzes the reversible oxidation of malate to oxaloacetate. The polypeptide is Malate dehydrogenase (Mannheimia succiniciproducens (strain KCTC 0769BP / MBEL55E)).